Consider the following 346-residue polypeptide: Elongation factor Ts (346 aa).

The tract at residues Thr-80–Val-83 is involved in Mg(2+) ion dislocation from EF-Tu.

This sequence belongs to the EF-Ts family.

It localises to the cytoplasm. Functionally, associates with the EF-Tu.GDP complex and induces the exchange of GDP to GTP. It remains bound to the aminoacyl-tRNA.EF-Tu.GTP complex up to the GTP hydrolysis stage on the ribosome. The sequence is that of Elongation factor Ts from Streptococcus pyogenes serotype M18 (strain MGAS8232).